The primary structure comprises 344 residues: AA9 family lytic polysaccharide monooxygenase D (344 aa).

A signal peptide spans 1-23; that stretch reads MKTATSYAAFLLSALAALPHASA. H24 serves as a coordination point for Cu(2+). C70 and C193 are joined by a disulfide. Residue H179 coordinates O2. Y190 lines the Cu(2+) pocket. 2 N-linked (GlcNAc...) asparagine glycosylation sites follow: N201 and N207. Residues 240 to 321 are disordered; the sequence is PPLSNLVSGD…PTTSGNLSAN (82 aa). The span at 259-292 shows a compositional bias: low complexity; sequence STSSATLSGGAAPTGTASGSTPAGTSQPSSTTGT. Residues 311–320 show a composition bias toward polar residues; the sequence is APTTSGNLSA. N317 is a glycosylation site (N-linked (GlcNAc...) asparagine).

It belongs to the polysaccharide monooxygenase AA9 family. Cu(2+) serves as cofactor.

It localises to the secreted. The catalysed reaction is [(1-&gt;4)-beta-D-glucosyl]n+m + reduced acceptor + O2 = 4-dehydro-beta-D-glucosyl-[(1-&gt;4)-beta-D-glucosyl]n-1 + [(1-&gt;4)-beta-D-glucosyl]m + acceptor + H2O.. Its function is as follows. Lytic polysaccharide monooxygenase (LPMO) that depolymerizes crystalline and amorphous polysaccharides via the oxidation of scissile alpha- or beta-(1-4)-glycosidic bonds, yielding C1 or C4 oxidation products. Catalysis by LPMOs requires the reduction of the active-site copper from Cu(II) to Cu(I) by a reducing agent and H(2)O(2) or O(2) as a cosubstrate. This Gloeophyllum trabeum (strain ATCC 11539 / FP-39264 / Madison 617) (Brown rot fungus) protein is AA9 family lytic polysaccharide monooxygenase D.